Reading from the N-terminus, the 187-residue chain is dCTP deaminase, dUMP-forming (187 aa).

DCTP is bound by residues 99–104, D117, 125–127, Q146, Y159, K166, and Q170; these read KSSIAR and TLE. The active-site Proton donor/acceptor is E127.

The protein belongs to the dCTP deaminase family. Homotrimer.

It catalyses the reaction dCTP + 2 H2O = dUMP + NH4(+) + diphosphate. It participates in pyrimidine metabolism; dUMP biosynthesis; dUMP from dCTP: step 1/1. In terms of biological role, bifunctional enzyme that catalyzes both the deamination of dCTP to dUTP and the hydrolysis of dUTP to dUMP without releasing the toxic dUTP intermediate. The sequence is that of dCTP deaminase, dUMP-forming from Methanoculleus marisnigri (strain ATCC 35101 / DSM 1498 / JR1).